The chain runs to 214 residues: Guanylate kinase (214 aa).

Residues 6–192 form the Guanylate kinase-like domain; that stretch reads GTLYIISAPS…ALEDLKAIFR (187 aa). 13-20 contacts ATP; the sequence is APSGAGKT.

It belongs to the guanylate kinase family.

The protein resides in the cytoplasm. The enzyme catalyses GMP + ATP = GDP + ADP. Functionally, essential for recycling GMP and indirectly, cGMP. In Pseudomonas syringae pv. syringae (strain B728a), this protein is Guanylate kinase.